The chain runs to 238 residues: Carboxymethylenebutenolidase (238 aa).

Active-site residues include Cys-123, Asp-171, and His-201.

It belongs to the dienelactone hydrolase family. In terms of assembly, monomer.

The enzyme catalyses 2-(5-oxo-2,5-dihydrofuran-2-ylidene)acetate + H2O = 4-oxohex-2-enedioate + H(+). It functions in the pathway aromatic compound metabolism; 3-chlorocatechol degradation. Its function is as follows. Ring cleavage of cyclic ester dienelactone to produce maleylacetate. This chain is Carboxymethylenebutenolidase (tcbE), found in Pseudomonas sp. (strain P51).